We begin with the raw amino-acid sequence, 314 residues long: Methionyl-tRNA formyltransferase (314 aa).

Residue 111–114 coordinates (6S)-5,6,7,8-tetrahydrofolate; the sequence is SLLP.

Belongs to the Fmt family.

It carries out the reaction L-methionyl-tRNA(fMet) + (6R)-10-formyltetrahydrofolate = N-formyl-L-methionyl-tRNA(fMet) + (6S)-5,6,7,8-tetrahydrofolate + H(+). Attaches a formyl group to the free amino group of methionyl-tRNA(fMet). The formyl group appears to play a dual role in the initiator identity of N-formylmethionyl-tRNA by promoting its recognition by IF2 and preventing the misappropriation of this tRNA by the elongation apparatus. The chain is Methionyl-tRNA formyltransferase from Chlorobium chlorochromatii (strain CaD3).